We begin with the raw amino-acid sequence, 423 residues long: Cyclin-dependent kinase 14 (423 aa).

A phosphoserine mark is found at Ser-32, Ser-49, and Ser-88. The span at 49-64 (SENNACINFKTSSTGK) shows a compositional bias: polar residues. The interval 49-87 (SENNACINFKTSSTGKESPKVRRHSSPSSPTSPKFGKAD) is disordered. One can recognise a Protein kinase domain in the interval 89–373 (YEKLEKLGEG…AQAALSHEYF (285 aa)). ATP is bound by residues 95 to 103 (LGEGSYATV) and Lys-118. Asp-210 serves as the catalytic Proton acceptor. The disordered stretch occupies residues 403–423 (ESMRAFGKNNSYGKSLSNSKH). Residues 410–423 (KNNSYGKSLSNSKH) show a composition bias toward polar residues.

This sequence belongs to the protein kinase superfamily. CMGC Ser/Thr protein kinase family. CDC2/CDKX subfamily. As to quaternary structure, found in a complex with LRP6, CCNY and CAPRIN2 during G2/M stage; CAPRIN2 functions as a scaffold for the complex by binding to CCNY via its N terminus and to CDK14 via its C terminus. Interacts with CCNY; CCNY mediates its recruitment to the plasma membrane and promotes phosphorylation of LRP6. Interacts with CCDN3 and CDKN1A. Interacts with SEPT8. Interacts with 14-3-3 proteina YWHAB, YWHAE, YWHAH and YWHAQ.

Its subcellular location is the cell membrane. It is found in the cytoplasm. The protein resides in the nucleus. It catalyses the reaction L-seryl-[protein] + ATP = O-phospho-L-seryl-[protein] + ADP + H(+). The catalysed reaction is L-threonyl-[protein] + ATP = O-phospho-L-threonyl-[protein] + ADP + H(+). With respect to regulation, serine/threonine-protein kinase activity is promoted by associated cyclins CCDN3 and CCNY and repressed by CDKN1A. Its function is as follows. Serine/threonine-protein kinase involved in the control of the eukaryotic cell cycle, whose activity is controlled by an associated cyclin. Acts as a cell-cycle regulator of Wnt signaling pathway during G2/M phase by mediating the phosphorylation of LRP6 at 'Ser-1490', leading to the activation of the Wnt signaling pathway. Acts as a regulator of cell cycle progression and cell proliferation via its interaction with CCDN3. Phosphorylates RB1 in vitro, however the relevance of such result remains to be confirmed in vivo. May also play a role in meiosis, neuron differentiation and may indirectly act as a negative regulator of insulin-responsive glucose transport. In Callithrix jacchus (White-tufted-ear marmoset), this protein is Cyclin-dependent kinase 14 (CDK14).